The primary structure comprises 128 residues: Glycine cleavage system H protein (128 aa).

In terms of domain architecture, Lipoyl-binding spans L24 to R106. K65 bears the N6-lipoyllysine mark.

This sequence belongs to the GcvH family. As to quaternary structure, the glycine cleavage system is composed of four proteins: P, T, L and H. (R)-lipoate serves as cofactor.

In terms of biological role, the glycine cleavage system catalyzes the degradation of glycine. The H protein shuttles the methylamine group of glycine from the P protein to the T protein. In Prochlorococcus marinus (strain NATL1A), this protein is Glycine cleavage system H protein.